A 177-amino-acid polypeptide reads, in one-letter code: Parathyroid hormone-related protein (177 aa).

The signal sequence occupies residues 1–24 (MLRRLVQQWSVAVFLLSYSVPSCG). A propeptide spanning residues 25–34 (RSVEGPGRRL) is cleaved from the precursor. Residues 57 to 68 (RFFLHHLIAEIH) form an important for receptor binding region. Residues 74-177 (ATSEVSPNSK…PEPELDSRRH (104 aa)) are disordered. Residues 76-90 (SEVSPNSKPAANTKN) show a composition bias toward polar residues. Residues 108–129 (TNKVEPYKEQPLKTPGKKKKGK) carry the Nuclear localization signal motif. Residues 109 to 118 (NKVEPYKEQP) are compositionally biased toward basic and acidic residues. Over residues 122–132 (PGKKKKGKPGK) the composition is skewed to basic residues.

Belongs to the parathyroid hormone family. In terms of assembly, PTHrP interacts with PTH1R (via N-terminal extracellular domain). There are several secretory forms, including osteostatin, arising from endoproteolytic cleavage of the initial translation product. Each of these secretory forms is believed to have one or more of its own receptors that mediates the normal paracrine, autocrine and endocrine actions.

Its subcellular location is the secreted. It localises to the cytoplasm. The protein resides in the nucleus. In terms of biological role, neuroendocrine peptide which is a critical regulator of cellular and organ growth, development, migration, differentiation and survival and of epithelial calcium ion transport. Acts by binding to its receptor, PTH1R, activating G protein-coupled receptor signaling. Regulates endochondral bone development and epithelial-mesenchymal interactions during the formation of the mammary glands and teeth. Required for skeletal homeostasis. Promotes mammary mesenchyme differentiation and bud outgrowth by modulating mesenchymal cell responsiveness to BMPs. Up-regulates BMPR1A expression in the mammary mesenchyme and this increases the sensitivity of these cells to BMPs and allows them to respond to BMP4 in a paracrine and/or autocrine fashion. BMP4 signaling in the mesenchyme, in turn, triggers epithelial outgrowth and augments MSX2 expression, which causes the mammary mesenchyme to inhibit hair follicle formation within the nipple sheath. Functionally, potent inhibitor of osteoclastic bone resorption. This Oryctolagus cuniculus (Rabbit) protein is Parathyroid hormone-related protein (PTHLH).